A 236-amino-acid polypeptide reads, in one-letter code: Putative N-acetylmannosamine-6-phosphate 2-epimerase (236 aa).

Belongs to the NanE family.

It catalyses the reaction an N-acyl-D-glucosamine 6-phosphate = an N-acyl-D-mannosamine 6-phosphate. It participates in amino-sugar metabolism; N-acetylneuraminate degradation; D-fructose 6-phosphate from N-acetylneuraminate: step 3/5. Functionally, converts N-acetylmannosamine-6-phosphate (ManNAc-6-P) to N-acetylglucosamine-6-phosphate (GlcNAc-6-P). This chain is Putative N-acetylmannosamine-6-phosphate 2-epimerase, found in Listeria welshimeri serovar 6b (strain ATCC 35897 / DSM 20650 / CCUG 15529 / CIP 8149 / NCTC 11857 / SLCC 5334 / V8).